The sequence spans 155 residues: Protein-export protein SecB (155 aa).

It belongs to the SecB family. In terms of assembly, homotetramer, a dimer of dimers. One homotetramer interacts with 1 SecA dimer.

The protein localises to the cytoplasm. Its function is as follows. One of the proteins required for the normal export of preproteins out of the cell cytoplasm. It is a molecular chaperone that binds to a subset of precursor proteins, maintaining them in a translocation-competent state. It also specifically binds to its receptor SecA. The polypeptide is Protein-export protein SecB (Shigella sonnei (strain Ss046)).